The sequence spans 1114 residues: M-phase phosphoprotein 9 (1114 aa).

Disordered stretches follow at residues 1–55, 106–161, 183–207, 267–301, and 410–468; these read MEDF…KTGP, RPSC…DCHV, AKEP…VVQA, TSWA…WKPP, and VLEP…STIP. Positions 24–51 are enriched in polar residues; the sequence is APQSLGLSLHANRSSPHLSTNGVSSFSG. The span at 106 to 119 shows a compositional bias: low complexity; sequence RPSCSSSSVSEQVS. Residues 149–161 are compositionally biased toward polar residues; the sequence is QPASSTSYPDCHV. Composition is skewed to polar residues over residues 267–280 and 429–446; these read TSWA…QSKQ and HNPS…TTRA. Residues 368 to 729 are required for its centrosomal localization; it reads LSQVLTLDPG…EAQVKQAEHE (362 aa). Residues 382–431 are interaction with CEP97; the sequence is KPKEHVAGIQAHGFLHALDDRISFSPDSVLEPSLSRHSDTDSSSQASHNP. The stretch at 574–733 forms a coiled coil; sequence DRCGQLDSAL…KQAEHESMLS (160 aa). A Phosphoserine; by TTBK2 modification is found at serine 710. A Glycyl lysine isopeptide (Lys-Gly) (interchain with G-Cter in ubiquitin) cross-link involves residue lysine 713. Serine 717 is modified (phosphoserine; by TTBK2). 3 disordered regions span residues 727–755, 840–931, and 975–1002; these read EHES…TSDV, SWGT…GFSH, and EEKK…NGLK. Residues 730-963 are interaction with KIF24; that stretch reads SMLSLRNGAK…PVSTLQQTTA (234 aa). Over residues 852-868 the composition is skewed to polar residues; that stretch reads SKLVNSRQTEPSVNTGR. Positions 881–898 are enriched in low complexity; sequence QTSASQRSSSLPPSSRKA. Phosphoserine is present on serine 926. A compositionally biased stretch (basic and acidic residues) spans 975–985; that stretch reads EEKKYSEKNSD. Residues 1040–1105 adopt a coiled-coil conformation; the sequence is RTLAETERFF…GSVRMTLKKF (66 aa).

In terms of assembly, interacts with CCP110, CEP97 and KIF24. Post-translationally, TTBK2-mediated phosphorylation at Ser-710 and Ser-717, promotes its ubiquitination at Lys-713 leading to proteasomal degradation, loss of MPHOSPH9 facilitates the removal of the CP110-CEP97 complex from the mother centrioles, promoting the initiation of ciliogenesis. Phosphorylated in M (mitotic) phase. In terms of processing, ubiquitinated at Lys-713, leading to proteasomal degradation.

It localises to the cytoplasm. Its subcellular location is the cytoskeleton. The protein localises to the microtubule organizing center. The protein resides in the centrosome. It is found in the centriole. It localises to the golgi apparatus membrane. Negatively regulates cilia formation by recruiting the CP110-CEP97 complex (a negative regulator of ciliogenesis) at the distal end of the mother centriole in ciliary cells. At the beginning of cilia formation, MPHOSPH9 undergoes TTBK2-mediated phosphorylation and degradation via the ubiquitin-proteasome system and removes itself and the CP110-CEP97 complex from the distal end of the mother centriole, which subsequently promotes cilia formation. The protein is M-phase phosphoprotein 9 (Mphosph9) of Mus musculus (Mouse).